A 151-amino-acid polypeptide reads, in one-letter code: Putative pre-16S rRNA nuclease (151 aa).

The protein belongs to the YqgF nuclease family.

It is found in the cytoplasm. In terms of biological role, could be a nuclease involved in processing of the 5'-end of pre-16S rRNA. This is Putative pre-16S rRNA nuclease from Methylococcus capsulatus (strain ATCC 33009 / NCIMB 11132 / Bath).